Here is a 485-residue protein sequence, read N- to C-terminus: Glutamyl-tRNA(Gln) amidotransferase subunit A (485 aa).

Catalysis depends on charge relay system residues Lys-78 and Ser-153. Residue Ser-177 is the Acyl-ester intermediate of the active site.

This sequence belongs to the amidase family. GatA subfamily. As to quaternary structure, heterotrimer of A, B and C subunits.

The catalysed reaction is L-glutamyl-tRNA(Gln) + L-glutamine + ATP + H2O = L-glutaminyl-tRNA(Gln) + L-glutamate + ADP + phosphate + H(+). Functionally, allows the formation of correctly charged Gln-tRNA(Gln) through the transamidation of misacylated Glu-tRNA(Gln) in organisms which lack glutaminyl-tRNA synthetase. The reaction takes place in the presence of glutamine and ATP through an activated gamma-phospho-Glu-tRNA(Gln). In Lawsonia intracellularis (strain PHE/MN1-00), this protein is Glutamyl-tRNA(Gln) amidotransferase subunit A.